The following is a 321-amino-acid chain: Reticulon-2 (321 aa).

Disordered regions lie at residues 1–36 and 65–85; these read MGHVLSFTHCKDAPSTASSTPDSCPPEGEEDDSPVT and PPVRARRGLGQSRVHAAPREE. Positions 134–321 constitute a Reticulon domain; sequence VKDLLYWRDI…TVKKPPAKQK (188 aa). 2 helical membrane passes run 163–183 and 250–270; these read FSVISVFAYGCLIILSVTLTL and FLVIIYLLTYVGAVFNGITVL.

It localises to the endoplasmic reticulum membrane. Its subcellular location is the sarcoplasmic reticulum membrane. It is found in the cell membrane. The protein localises to the sarcolemma. The protein resides in the T-tubule. It localises to the cytoplasm. Its subcellular location is the myofibril. It is found in the sarcomere. The protein localises to the z line. The protein resides in the cytoskeleton. In terms of biological role, inhibits amyloid precursor protein processing, probably by blocking BACE1 activity. Enhances trafficking of the glutamate transporter SLC1A1/EAAC1 from the endoplasmic reticulum to the cell surface. Plays a role in the translocation of SLC2A4/GLUT4 from intracellular membranes to the cell membrane which facilitates the uptake of glucose into the cell. In Xenopus tropicalis (Western clawed frog), this protein is Reticulon-2.